Consider the following 123-residue polypeptide: Unknown 12C protein (123 aa).

The N-terminal stretch at 1–17 is a signal peptide; sequence MMSALFLVLSVSLLVSG.

Post-translationally, contains 6 disulfide bonds. In terms of tissue distribution, expressed in acontia, a specialised envenomation structure laden with batteries of venom-containing nematocysts found only in the superfamily Metridioidea.

The protein localises to the secreted. The protein resides in the nematocyst. Functionally, cysteine-rich protein with probable toxin activity. This is Unknown 12C protein from Calliactis polypus (Hermit crab anemone).